We begin with the raw amino-acid sequence, 122 residues long: Putative iron-sulfur cluster insertion protein ErpA (122 aa).

The iron-sulfur cluster site is built by Cys50, Cys114, and Cys116.

It belongs to the HesB/IscA family. Homodimer. Iron-sulfur cluster is required as a cofactor.

Its function is as follows. Required for insertion of 4Fe-4S clusters. The chain is Putative iron-sulfur cluster insertion protein ErpA from Cupriavidus necator (strain ATCC 17699 / DSM 428 / KCTC 22496 / NCIMB 10442 / H16 / Stanier 337) (Ralstonia eutropha).